Consider the following 511-residue polypeptide: Maturase K (511 aa).

This sequence belongs to the intron maturase 2 family. MatK subfamily.

The protein resides in the plastid. It localises to the chloroplast. Functionally, usually encoded in the trnK tRNA gene intron. Probably assists in splicing its own and other chloroplast group II introns. In Paulownia tomentosa (Princess tree), this protein is Maturase K.